The chain runs to 241 residues: Ribonuclease PH (241 aa).

Residues arginine 89 and glycine 127 to arginine 129 contribute to the phosphate site.

This sequence belongs to the RNase PH family. In terms of assembly, homohexameric ring arranged as a trimer of dimers.

It catalyses the reaction tRNA(n+1) + phosphate = tRNA(n) + a ribonucleoside 5'-diphosphate. In terms of biological role, phosphorolytic 3'-5' exoribonuclease that plays an important role in tRNA 3'-end maturation. Removes nucleotide residues following the 3'-CCA terminus of tRNAs; can also add nucleotides to the ends of RNA molecules by using nucleoside diphosphates as substrates, but this may not be physiologically important. Probably plays a role in initiation of 16S rRNA degradation (leading to ribosome degradation) during starvation. The sequence is that of Ribonuclease PH from Xylella fastidiosa (strain 9a5c).